Reading from the N-terminus, the 142-residue chain is Snaclec GPIB-binding protein subunit alpha (142 aa).

3 disulfide bridges follow: C6/C17, C39/C136, and C111/C128. A C-type lectin domain is found at 13–137 (HRQYCYKFFQ…CVEGNPFVCK (125 aa)).

Belongs to the snaclec family. As to quaternary structure, heterodimer of subunits alpha and beta; disulfide-linked. Expressed by the venom gland.

It is found in the secreted. Functionally, binds to platelet GPIb (subunit alpha) (GP1BA) and functions as a receptor blocker for vWF binding to GPIb. The platelet GPIb-binding site resides on the GPIB-BP subunit beta and not on the alpha subunit. At a final concentration of 104 nM totally abolishes vWF-dependent shear-induced platelet aggregation (SIPA) at a high shear stress, but had no effect on SIPA at a low shear stress. In Bothrops jararaca (Jararaca), this protein is Snaclec GPIB-binding protein subunit alpha.